The chain runs to 357 residues: tRNA pseudouridine synthase D (357 aa).

Residue Asp76 is the Nucleophile of the active site. Residues 151-331 (GMPNYFGYQR…DGRYKDEEAQ (181 aa)) form the TRUD domain.

It belongs to the pseudouridine synthase TruD family.

It carries out the reaction uridine(13) in tRNA = pseudouridine(13) in tRNA. Responsible for synthesis of pseudouridine from uracil-13 in transfer RNAs. The chain is tRNA pseudouridine synthase D from Sulfurimonas denitrificans (strain ATCC 33889 / DSM 1251) (Thiomicrospira denitrificans (strain ATCC 33889 / DSM 1251)).